A 258-amino-acid polypeptide reads, in one-letter code: Acetylglutamate kinase (258 aa).

Residues 41 to 42 (GG), Arg-63, and Asn-156 contribute to the substrate site.

This sequence belongs to the acetylglutamate kinase family. ArgB subfamily.

The protein resides in the cytoplasm. It catalyses the reaction N-acetyl-L-glutamate + ATP = N-acetyl-L-glutamyl 5-phosphate + ADP. It participates in amino-acid biosynthesis; L-arginine biosynthesis; N(2)-acetyl-L-ornithine from L-glutamate: step 2/4. In terms of biological role, catalyzes the ATP-dependent phosphorylation of N-acetyl-L-glutamate. The polypeptide is Acetylglutamate kinase (Bacillus pumilus (strain SAFR-032)).